Reading from the N-terminus, the 915-residue chain is Protein O-mannosyl-transferase TMTC3 (915 aa).

Topologically, residues 1 to 8 (MANINLKE) are cytoplasmic. The chain crosses the membrane as a helical span at residues 9–29 (ITLIVGVVTACYWNSLFCGFV). Residues 30–93 (FDDVSAILDN…LSELKPMSYH (64 aa)) are Extracellular-facing. Residues 94–114 (LLNMIFHAVVSVIFLKVCKLF) form a helical membrane-spanning segment. Over 115 to 120 (LDNKSS) the chain is Cytoplasmic. The next 2 membrane-spanning stretches (helical) occupy residues 121-139 (VIAS…AVTG) and 140-158 (VVGR…AFLS). Residues 159 to 166 (YTRSKGPD) are Cytoplasmic-facing. A helical membrane pass occupies residues 167–187 (NSIIWTPIALTVFLVAVATLC). Over 188-193 (KEQGIT) the chain is Extracellular. A helical membrane pass occupies residues 194–214 (VVGICCVYEVFIAQGYTLPLL). At 215-231 (CTTAGQFLRGKGSIPFS) the chain is on the cytoplasmic side. Residues 232-252 (MLQTLVKLIVLMFSTLLLVVI) traverse the membrane as a helical segment. Topologically, residues 253–317 (RVQVIQSQLP…TIPLIESLLD (65 aa)) are extracellular. Residues 318-338 (IRNLATFTFFCFLGMLGVFSI) form a helical membrane-spanning segment. Residues 339-353 (RYSGDSSKTVLMALC) lie on the Cytoplasmic side of the membrane. Residues 354 to 374 (LMALPFIPASNLFFPVGFVVA) form a helical membrane-spanning segment. Over 375–376 (ER) the chain is Extracellular. A helical membrane pass occupies residues 377 to 397 (VLYVPSMGFCILVAHGWQKIS). Residues 398 to 404 (TKSVFKK) are Cytoplasmic-facing. A helical transmembrane segment spans residues 405–423 (LSWICLSMVILTHSLKTFH). Residues 424-915 (RNWDWESEYT…EEIERILNGE (492 aa)) lie on the Extracellular side of the membrane. TPR repeat units follow at residues 446-479 (AKLW…QPDD), 480-513 (IGAH…MPQI), 529-562 (NVYI…RPDF), 563-596 (KQAY…DRNN), 597-631 (ADLW…NPKH), 669-702 (ANGY…QADF), 703-736 (RSAL…YPDH), 738-771 (KGLI…DPSN), and 772-805 (VQGK…APHE). An N-linked (GlcNAc...) asparagine glycan is attached at Asn-494. The residue at position 503 (Tyr-503) is a Phosphotyrosine. N-linked (GlcNAc...) asparagine glycosylation occurs at Asn-541. A disordered region spans residues 848 to 892 (KEIRGESRQTQIVKTSDNKSQSKSNKQLGKNGDEETPHKTTKDIK). Asn-865 is a glycosylation site (N-linked (GlcNAc...) asparagine). Residues 865 to 874 (NKSQSKSNKQ) are compositionally biased toward low complexity. Residues 878-892 (NGDEETPHKTTKDIK) are compositionally biased toward basic and acidic residues.

This sequence belongs to the TMTC family.

It is found in the membrane. The protein resides in the endoplasmic reticulum. The enzyme catalyses a di-trans,poly-cis-dolichyl beta-D-mannosyl phosphate + L-seryl-[protein] = 3-O-(alpha-D-mannosyl)-L-seryl-[protein] + a di-trans,poly-cis-dolichyl phosphate + H(+). It catalyses the reaction a di-trans,poly-cis-dolichyl beta-D-mannosyl phosphate + L-threonyl-[protein] = 3-O-(alpha-D-mannosyl)-L-threonyl-[protein] + a di-trans,poly-cis-dolichyl phosphate + H(+). Its pathway is protein modification; protein glycosylation. Transfers mannosyl residues to the hydroxyl group of serine or threonine residues. The 4 members of the TMTC family are O-mannosyl-transferases dedicated primarily to the cadherin superfamily, each member seems to have a distinct role in decorating the cadherin domains with O-linked mannose glycans at specific regions. Also acts as O-mannosyl-transferase on other proteins such as PDIA3. Involved in the positive regulation of proteasomal protein degradation in the endoplasmic reticulum (ER), and the control of ER stress response. In Homo sapiens (Human), this protein is Protein O-mannosyl-transferase TMTC3.